A 152-amino-acid chain; its full sequence is SsrA-binding protein (152 aa).

This sequence belongs to the SmpB family.

The protein resides in the cytoplasm. Functionally, required for rescue of stalled ribosomes mediated by trans-translation. Binds to transfer-messenger RNA (tmRNA), required for stable association of tmRNA with ribosomes. tmRNA and SmpB together mimic tRNA shape, replacing the anticodon stem-loop with SmpB. tmRNA is encoded by the ssrA gene; the 2 termini fold to resemble tRNA(Ala) and it encodes a 'tag peptide', a short internal open reading frame. During trans-translation Ala-aminoacylated tmRNA acts like a tRNA, entering the A-site of stalled ribosomes, displacing the stalled mRNA. The ribosome then switches to translate the ORF on the tmRNA; the nascent peptide is terminated with the 'tag peptide' encoded by the tmRNA and targeted for degradation. The ribosome is freed to recommence translation, which seems to be the essential function of trans-translation. The protein is SsrA-binding protein of Helicobacter pylori (strain HPAG1).